The following is a 34-amino-acid chain: MSDIN-like toxin proprotein 7 (34 aa).

Residues 1 to 10 constitute a propeptide that is removed on maturation; sequence MSDINATRLP. Positions 11–17 form a cross-link, cyclopeptide (Ala-Pro); it reads AWLTDCP. The propeptide occupies 18-34; the sequence is CVGDDVNRLLTRGESLC.

Belongs to the MSDIN fungal toxin family. Processed by the macrocyclase-peptidase enzyme POPB to yield a toxic cyclic heptapeptide. POPB first removes 10 residues from the N-terminus. Conformational trapping of the remaining peptide forces the enzyme to release this intermediate rather than proceed to macrocyclization. The enzyme rebinds the remaining peptide in a different conformation and catalyzes macrocyclization of the N-terminal 7 residues. In terms of tissue distribution, expressed in basidiocarps.

Its function is as follows. Probable toxin that belongs to the MSDIN-like toxin family responsible for a large number of food poisoning cases and deaths. The chain is MSDIN-like toxin proprotein 7 from Amanita exitialis (Guangzhou destroying angel).